The primary structure comprises 548 residues: Rhodopsin kinase GRK7 (548 aa).

Position 34 is a phosphoserine; by PKA (Ser34). The 118-residue stretch at Phe54–Leu171 folds into the RGS domain. One can recognise a Protein kinase domain in the interval Phe186–Phe449. ATP contacts are provided by residues Leu192–Val200 and Lys215. Asp311 functions as the Proton acceptor in the catalytic mechanism. An AGC-kinase C-terminal domain is found at Gln450–Glu515. The interval Glu523–Leu548 is disordered. The residue at position 545 (Cys545) is a Cysteine methyl ester. Cys545 carries the S-geranylgeranyl cysteine lipid modification. Residues Leu546–Leu548 constitute a propeptide, removed in mature form.

This sequence belongs to the protein kinase superfamily. AGC Ser/Thr protein kinase family. GPRK subfamily. As to quaternary structure, interacts (when prenylated) with PDE6D; this promotes release from membranes. In terms of processing, autophosphorylated. Phosphorylation at Ser-34 is regulated by light and activated by cAMP. Retina. Cones and rod.

Its subcellular location is the membrane. It catalyses the reaction L-threonyl-[rhodopsin] + ATP = O-phospho-L-threonyl-[rhodopsin] + ADP + H(+). It carries out the reaction L-seryl-[rhodopsin] + ATP = O-phospho-L-seryl-[rhodopsin] + ADP + H(+). Its activity is regulated as follows. Inhibited by phosphorylation of Ser-34. Functionally, retina-specific kinase involved in the shutoff of the photoresponse and adaptation to changing light conditions via cone opsin phosphorylation, including rhodopsin (RHO). This is Rhodopsin kinase GRK7 (GRK7) from Ictidomys tridecemlineatus (Thirteen-lined ground squirrel).